A 459-amino-acid polypeptide reads, in one-letter code: Zeatin O-glucosyltransferase (459 aa).

Catalysis depends on His26, which acts as the Proton acceptor. His26 provides a ligand contact to an anthocyanidin. Asp125 serves as the catalytic Charge relay. The UDP-alpha-D-glucose site is built by Ser148, Ala335, Gln337, His352, Trp355, Asn356, Ser357, Glu360, Asp376, and Gln377.

The protein belongs to the UDP-glycosyltransferase family.

It catalyses the reaction trans-zeatin + UDP-alpha-D-glucose = O-beta-D-glucosyl-trans-zeatin + UDP + H(+). Functionally, may regulate active versus storage forms of cytokinins, and could have an impact on seed growth. Can also use UDP-xylose to catalyze the formation of O-xylosylzeatin but at much lower affinity. This chain is Zeatin O-glucosyltransferase, found in Phaseolus lunatus (Lima bean).